Here is a 303-residue protein sequence, read N- to C-terminus: Aliphatic sulfonates import ATP-binding protein SsuB (303 aa).

Residues 39–263 (LHVRQVVKRY…ERGAAGFAQL (225 aa)) form the ABC transporter domain. 71 to 78 (GRSGCGKS) is a binding site for ATP.

It belongs to the ABC transporter superfamily. Aliphatic sulfonates importer (TC 3.A.1.17.2) family. The complex is composed of two ATP-binding proteins (SsuB), two transmembrane proteins (SsuC) and a solute-binding protein (SsuA).

Its subcellular location is the cell inner membrane. It carries out the reaction ATP + H2O + aliphatic sulfonate-[sulfonate-binding protein]Side 1 = ADP + phosphate + aliphatic sulfonateSide 2 + [sulfonate-binding protein]Side 1.. Its function is as follows. Part of the ABC transporter complex SsuABC involved in aliphatic sulfonates import. Responsible for energy coupling to the transport system. This is Aliphatic sulfonates import ATP-binding protein SsuB from Cupriavidus necator (strain ATCC 17699 / DSM 428 / KCTC 22496 / NCIMB 10442 / H16 / Stanier 337) (Ralstonia eutropha).